Consider the following 86-residue polypeptide: RNA-binding protein Hfq (86 aa).

Residues 9-68 form the Sm domain; that stretch reads DPFLNALRRERIPVSIYLVNGIKLQGQIESFDQFVILLKNTVNQMVYKHAISTVVPARPV. The segment at 65–86 is disordered; the sequence is ARPVSHHSGERGSDRPSEKSED. Residues 71 to 86 show a composition bias toward basic and acidic residues; it reads HSGERGSDRPSEKSED.

This sequence belongs to the Hfq family. As to quaternary structure, homohexamer.

Functionally, RNA chaperone that binds small regulatory RNA (sRNAs) and mRNAs to facilitate mRNA translational regulation in response to envelope stress, environmental stress and changes in metabolite concentrations. Also binds with high specificity to tRNAs. The sequence is that of RNA-binding protein Hfq from Vibrio vulnificus (strain YJ016).